The primary structure comprises 273 residues: Bifunctional protein FolD (273 aa).

NADP(+)-binding positions include 149 to 151 and V215; that span reads GLG.

This sequence belongs to the tetrahydrofolate dehydrogenase/cyclohydrolase family. In terms of assembly, homodimer.

The catalysed reaction is (6R)-5,10-methylene-5,6,7,8-tetrahydrofolate + NADP(+) = (6R)-5,10-methenyltetrahydrofolate + NADPH. It carries out the reaction (6R)-5,10-methenyltetrahydrofolate + H2O = (6R)-10-formyltetrahydrofolate + H(+). It functions in the pathway one-carbon metabolism; tetrahydrofolate interconversion. Its function is as follows. Catalyzes the oxidation of 5,10-methylenetetrahydrofolate to 5,10-methenyltetrahydrofolate and then the hydrolysis of 5,10-methenyltetrahydrofolate to 10-formyltetrahydrofolate. The protein is Bifunctional protein FolD of Mycoplasma genitalium (strain ATCC 33530 / DSM 19775 / NCTC 10195 / G37) (Mycoplasmoides genitalium).